Reading from the N-terminus, the 247-residue chain is Carboxy-S-adenosyl-L-methionine synthase (247 aa).

Residues Tyr40, 65–67 (GCS), 90–91 (DN), 122–123 (DI), Asn137, and Arg204 each bind S-adenosyl-L-methionine.

It belongs to the class I-like SAM-binding methyltransferase superfamily. Cx-SAM synthase family. As to quaternary structure, homodimer.

It carries out the reaction prephenate + S-adenosyl-L-methionine = carboxy-S-adenosyl-L-methionine + 3-phenylpyruvate + H2O. In terms of biological role, catalyzes the conversion of S-adenosyl-L-methionine (SAM) to carboxy-S-adenosyl-L-methionine (Cx-SAM). This is Carboxy-S-adenosyl-L-methionine synthase from Pseudomonas syringae pv. tomato (strain ATCC BAA-871 / DC3000).